The sequence spans 139 residues: Intrinsically disordered protein, expressed in pharynx 15 (139 aa).

A compositionally biased stretch (polar residues) spans 1–12 (MNNNQGMYNTQT). The segment at 1-98 (MNNNQGMYNT…GSSTPSPQYS (98 aa)) is disordered. Low complexity-rich tracts occupy residues 13-41 (TQGYGNNQGSYQNQMMYNNNNPQNTQTTT) and 49-98 (QPQQ…PQYS).

In Caenorhabditis elegans, this protein is Intrinsically disordered protein, expressed in pharynx 15.